The chain runs to 92 residues: Conotoxin Mr15.2 (92 aa).

Residues 1–20 (MSTLKMMLLILLLLLPMATF) form the signal peptide. Residues 21-53 (DSDGQAIPGGGIPSAVNSRVGGDEKSGRSLEKR) constitute a propeptide that is removed on maturation. A disordered region spans residues 30-49 (GGIPSAVNSRVGGDEKSGRS).

This sequence belongs to the conotoxin N superfamily. In terms of processing, contains 4 disulfide bonds. In terms of tissue distribution, expressed by the venom duct.

It localises to the secreted. The polypeptide is Conotoxin Mr15.2 (Conus marmoreus (Marble cone)).